The sequence spans 138 residues: Small ribosomal subunit protein uS9 (138 aa).

Over residues 100 to 118 the composition is skewed to basic and acidic residues; that stretch reads PENRPPLKTEGYLTRDPRA. The interval 100–138 is disordered; the sequence is PENRPPLKTEGYLTRDPRAKERKKYGLHKARKAPQYSKR. The segment covering 119–138 has biased composition (basic residues); sequence KERKKYGLHKARKAPQYSKR.

It belongs to the universal ribosomal protein uS9 family.

This chain is Small ribosomal subunit protein uS9, found in Trichormus variabilis (strain ATCC 29413 / PCC 7937) (Anabaena variabilis).